The primary structure comprises 245 residues: OCIA domain-containing protein 1 (245 aa).

The region spanning 1–112 (MNGRADFREP…KKLENSPLGE (112 aa)) is the OCIA domain. 4 positions are modified to phosphoserine: Ser108, Ser116, Ser123, and Ser191. Disordered regions lie at residues 111-141 (GEAL…VSGQ) and 169-245 (NESA…TWDE). Composition is skewed to basic and acidic residues over residues 190 to 210 (ESPK…RESY) and 224 to 238 (PMHE…KVNK).

This sequence belongs to the OCIAD1 family. As to quaternary structure, interacts with OCIAD2. Interacts with STAT3. In terms of tissue distribution, isoform 1 is highly expressed in many tissues, including testis, brain, placenta, ovary, prostate and mammary gland. Isoform 2 expression is restricted to the central nervous system including brain, cerebellum and spinal cord.

The protein localises to the endosome. Maintains stem cell potency. Increases STAT3 phosphorylation and controls ERK phosphorylation. May act as a scaffold, increasing STAT3 recruitment onto endosomes. Involved in integrin-mediated cancer cell adhesion and colony formation in ovarian cancer. The sequence is that of OCIA domain-containing protein 1 from Homo sapiens (Human).